A 275-amino-acid polypeptide reads, in one-letter code: Myb/SANT-like DNA-binding domain-containing protein 3 (275 aa).

The Myb-like domain maps to 13 to 78 (FSELEKSILL…QLKKCWENIK (66 aa)). A phosphoserine mark is found at Ser96 and Ser98. Residue Lys154 forms a Glycyl lysine isopeptide (Lys-Gly) (interchain with G-Cter in SUMO2) linkage. Positions 211 to 247 (QLIQMNEVHVAKIQQIERECEMAEEEHRIKMEVLNKK) form a coiled coil. The residue at position 274 (Ser274) is a Phosphoserine.

Belongs to the MSANTD3 family.

This Bos taurus (Bovine) protein is Myb/SANT-like DNA-binding domain-containing protein 3 (MSANTD3).